The sequence spans 558 residues: Phosphatidylserine lipase ABHD16A (558 aa).

2 helical membrane-spanning segments follow: residues 60–80 (ILAL…FAFF) and 93–113 (VVPF…VACL). At 114 to 558 (RGIGRWTNPQ…AQNFQMPWHL (445 aa)) the chain is on the cytoplasmic side. One can recognise an AB hydrolase-1 domain in the interval 281–407 (LVICCEGNAG…LVTRTVRQHL (127 aa)). Catalysis depends on charge relay system residues Ser-355, Asp-430, and His-507.

It belongs to the AB hydrolase superfamily. ABHD16 family.

The protein resides in the membrane. It carries out the reaction 1-heptadecanoyl-2-(5Z,8Z,11Z,14Z-eicosatetraenoyl)-sn-glycero-3-phosphoserine + H2O = 1-heptadecanoyl-sn-glycero-3-phosphoserine + (5Z,8Z,11Z,14Z)-eicosatetraenoate + H(+). The enzyme catalyses 1-hexadecanoyl-2-(9Z-octadecenoyl)-sn-glycero-3-phospho-L-serine + H2O = 1-hexadecanoyl-sn-glycero-3-phospho-L-serine + (9Z)-octadecenoate + H(+). It catalyses the reaction 1-octadecanoyl-2-(9Z,12Z-octadecadienoyl)-sn-glycero-3-phosphoserine + H2O = 1-octadecanoyl-sn-glycero-3-phosphoserine + (9Z,12Z)-octadecadienoate + H(+). The catalysed reaction is 1-heptadecanoyl-2-(5Z,8Z,11Z,14Z-eicosatetraenoyl)-sn-glycero-3-phosphocholine + H2O = 1-heptadecanoyl-sn-glycero-3-phosphocholine + (5Z,8Z,11Z,14Z)-eicosatetraenoate + H(+). It carries out the reaction 1-hexadecanoyl-2-(9Z-octadecenoyl)-sn-glycero-3-phosphoglycerol + H2O = 1-hexadecanoyl-sn-glycero-3-phosphoglycerol + (9Z)-octadecenoate + H(+). The enzyme catalyses 1-hexadecanoyl-2-(9Z-octadecenoyl)-sn-glycero-3-phospho-(1D-myo-inositol) + H2O = 1-hexadecanoyl-sn-glycero-3-phospho-(1D-myo-inositol) + (9Z)-octadecenoate + H(+). It catalyses the reaction 1-heptadecanoyl-2-(5Z,8Z,11Z,14Z-eicosatetraenoyl)-sn-glycero-3-phosphoethanolamine + H2O = 1-heptadecanoyl-sn-glycero-3-phosphoethanolamine + (5Z,8Z,11Z,14Z)-eicosatetraenoate + H(+). The catalysed reaction is 1-hexadecanoyl-2-(9Z-octadecenoyl)-sn-glycero-3-phospho-(1'-sn-glycerol) + H2O = 1-hexadecanoyl-sn-glycero-3-phospho-(1'-sn-glycerol) + (9Z)-octadecenoate + H(+). It carries out the reaction Hydrolyzes glycerol monoesters of long-chain fatty acids.. The enzyme catalyses 1-tetradecanoylglycerol + H2O = tetradecanoate + glycerol + H(+). It catalyses the reaction 2-hexadecanoylglycerol + H2O = glycerol + hexadecanoate + H(+). The catalysed reaction is 1-(9Z-octadecenoyl)-glycerol + H2O = glycerol + (9Z)-octadecenoate + H(+). It carries out the reaction 2-(9Z-octadecenoyl)-glycerol + H2O = glycerol + (9Z)-octadecenoate + H(+). The enzyme catalyses 2-(9Z,12Z-octadecadienoyl)-glycerol + H2O = (9Z,12Z)-octadecadienoate + glycerol + H(+). It catalyses the reaction 1-(5Z,8Z,11Z,14Z-eicosatetraenoyl)-glycerol + H2O = glycerol + (5Z,8Z,11Z,14Z)-eicosatetraenoate + H(+). The catalysed reaction is 2-(5Z,8Z,11Z,14Z-eicosatetraenoyl)-glycerol + H2O = glycerol + (5Z,8Z,11Z,14Z)-eicosatetraenoate + H(+). It carries out the reaction prostaglandin D2-1-glycerol ester + H2O = prostaglandin D2 + glycerol + H(+). The enzyme catalyses 2-glyceryl-15-deoxy-Delta(12,14)-prostaglandin J2 + H2O = 15-deoxy-Delta(12,14)-prostaglandin J2 + glycerol + H(+). It catalyses the reaction 1-(9Z,12Z-octadecadienoyl)-glycerol + H2O = (9Z,12Z)-octadecadienoate + glycerol + H(+). Its function is as follows. Phosphatidylserine (PS) lipase that mediates the hydrolysis of phosphatidylserine to generate lysophosphatidylserine (LPS). LPS constitutes a class of signaling lipids that regulates immunological and neurological processes. Has no activity towards diacylglycerol, triacylglycerol or lysophosphatidylserine lipase. Also has monoacylglycerol lipase activity, with preference for 1-(9Z,12Z-octadecadienoyl)-glycerol (1-LG) and 2-glyceryl-15-deoxy-Delta(12,14)-prostaglandin J2 (15d-PGJ(2)-G). The protein is Phosphatidylserine lipase ABHD16A of Pongo abelii (Sumatran orangutan).